The chain runs to 70 residues: ATP synthase subunit epsilon, mitochondrial (70 aa).

It belongs to the eukaryotic ATPase epsilon family. In terms of assembly, F-type ATPases have 2 components, CF(1) - the catalytic core - and CF(0) - the membrane proton channel. CF(1) has five subunits: alpha(3), beta(3), gamma(1), delta(1), epsilon(1). CF(0) has three main subunits: a, b and c.

Its subcellular location is the mitochondrion. It localises to the mitochondrion inner membrane. Mitochondrial membrane ATP synthase (F(1)F(0) ATP synthase or Complex V) produces ATP from ADP in the presence of a proton gradient across the membrane which is generated by electron transport complexes of the respiratory chain. F-type ATPases consist of two structural domains, F(1) - containing the extramembraneous catalytic core, and F(0) - containing the membrane proton channel, linked together by a central stalk and a peripheral stalk. During catalysis, ATP synthesis in the catalytic domain of F(1) is coupled via a rotary mechanism of the central stalk subunits to proton translocation. Part of the complex F(1) domain and of the central stalk which is part of the complex rotary element. Rotation of the central stalk against the surrounding alpha(3)beta(3) subunits leads to hydrolysis of ATP in three separate catalytic sites on the beta subunits. This chain is ATP synthase subunit epsilon, mitochondrial, found in Ipomoea batatas (Sweet potato).